A 386-amino-acid chain; its full sequence is Patatin-16 (386 aa).

Positions 1-23 are cleaved as a signal peptide; sequence MATTKSFLILIVMILATTSSTFA. Residues 32–229 form the PNPLA domain; sequence LSIDGGGIKG…TVADPALLSV (198 aa). The GXGXXG motif lies at 36 to 41; that stretch reads GGGIKG. Residues 75–79 carry the GXSXG motif; it reads GTSTG. Residue Ser77 is the Nucleophile of the active site. Asn115 carries an N-linked (GlcNAc...) asparagine glycan. The active-site Proton acceptor is Asp215. Residues 215–217 carry the DGA/G motif; that stretch reads DGA. Positions 360 to 384 form a coiled coil; it reads ETYEEALKRFAKLLSDRKKLRANKA.

Belongs to the patatin family.

It is found in the vacuole. Functionally, probable lipolytic acyl hydrolase (LAH), an activity which is thought to be involved in the response of tubers to pathogens. This Solanum tuberosum (Potato) protein is Patatin-16.